We begin with the raw amino-acid sequence, 238 residues long: 1-(5-phosphoribosyl)-5-[(5-phosphoribosylamino)methylideneamino] imidazole-4-carboxamide isomerase (238 aa).

Residue Asp8 is the Proton acceptor of the active site. The active-site Proton donor is the Asp130.

Belongs to the HisA/HisF family.

It localises to the cytoplasm. The catalysed reaction is 1-(5-phospho-beta-D-ribosyl)-5-[(5-phospho-beta-D-ribosylamino)methylideneamino]imidazole-4-carboxamide = 5-[(5-phospho-1-deoxy-D-ribulos-1-ylimino)methylamino]-1-(5-phospho-beta-D-ribosyl)imidazole-4-carboxamide. The protein operates within amino-acid biosynthesis; L-histidine biosynthesis; L-histidine from 5-phospho-alpha-D-ribose 1-diphosphate: step 4/9. The polypeptide is 1-(5-phosphoribosyl)-5-[(5-phosphoribosylamino)methylideneamino] imidazole-4-carboxamide isomerase (Methanococcus vannielii (strain ATCC 35089 / DSM 1224 / JCM 13029 / OCM 148 / SB)).